The primary structure comprises 504 residues: Alpha,alpha-trehalose-phosphate synthase [UDP-forming] (504 aa).

Residues tyrosine 97 and aspartate 151 each coordinate D-glucose 6-phosphate. 2 residues coordinate UDP: arginine 287 and lysine 292. Arginine 287 and lysine 292 together coordinate UDP-alpha-D-glucose. Arginine 325 contributes to the D-glucose 6-phosphate binding site. Residue 386–394 (DGMNLVSYE) participates in UDP-alpha-D-glucose binding. Residue 390-394 (LVSYE) coordinates UDP. Residues 482-504 (AGKLPTKETPVNGETSKLETSSQ) form a disordered region. The span at 493–504 (NGETSKLETSSQ) shows a compositional bias: polar residues.

It belongs to the glycosyltransferase 20 family.

The enzyme catalyses D-glucose 6-phosphate + UDP-alpha-D-glucose = alpha,alpha-trehalose 6-phosphate + UDP + H(+). Its pathway is carbohydrate biosynthesis. Its function is as follows. Synthase catalytic subunit of the trehalose synthase complex that catalyzes the production of trehalose from glucose-6-phosphate and UDP-alpha-D-glucose in a two step process. The protein is Alpha,alpha-trehalose-phosphate synthase [UDP-forming] (tpsA) of Emericella nidulans (strain FGSC A4 / ATCC 38163 / CBS 112.46 / NRRL 194 / M139) (Aspergillus nidulans).